Reading from the N-terminus, the 433-residue chain is Serine--tRNA ligase (433 aa).

236–238 (TAE) contacts L-serine. Residue 267–269 (RSE) participates in ATP binding. Glu290 lines the L-serine pocket. 354–357 (EISS) is a binding site for ATP. L-serine is bound at residue Ser394.

Belongs to the class-II aminoacyl-tRNA synthetase family. Type-1 seryl-tRNA synthetase subfamily. As to quaternary structure, homodimer. The tRNA molecule binds across the dimer.

The protein localises to the cytoplasm. The enzyme catalyses tRNA(Ser) + L-serine + ATP = L-seryl-tRNA(Ser) + AMP + diphosphate + H(+). It catalyses the reaction tRNA(Sec) + L-serine + ATP = L-seryl-tRNA(Sec) + AMP + diphosphate + H(+). It functions in the pathway aminoacyl-tRNA biosynthesis; selenocysteinyl-tRNA(Sec) biosynthesis; L-seryl-tRNA(Sec) from L-serine and tRNA(Sec): step 1/1. Functionally, catalyzes the attachment of serine to tRNA(Ser). Is also able to aminoacylate tRNA(Sec) with serine, to form the misacylated tRNA L-seryl-tRNA(Sec), which will be further converted into selenocysteinyl-tRNA(Sec). The chain is Serine--tRNA ligase from Acidiphilium cryptum (strain JF-5).